The primary structure comprises 242 residues: Small ribosomal subunit protein uS2 (242 aa).

Belongs to the universal ribosomal protein uS2 family.

The protein is Small ribosomal subunit protein uS2 of Pseudoalteromonas translucida (strain TAC 125).